The following is a 282-amino-acid chain: Undecaprenyl-diphosphatase (282 aa).

Transmembrane regions (helical) follow at residues 1–21 (MNLFQAIILGIIQGLTEFLPI), 40–60 (GAAFTAIIQIGTLAAVLIYFA), 89–109 (WMIAVGTIPIVVFGLTFKHEI), 112–132 (VLRSLYIVSASMIGLALVLVV), 153–173 (LSWTDAIIIGLAQAMALIPGS), 196–216 (FSFLLSLPSVFAAGMLELYQT), 228–248 (LNLAVATIAAFIFGYLSIAFL), and 258–278 (GIFIAYRLILGIGLIVMIGTG).

It belongs to the UppP family.

The protein resides in the cell inner membrane. It catalyses the reaction di-trans,octa-cis-undecaprenyl diphosphate + H2O = di-trans,octa-cis-undecaprenyl phosphate + phosphate + H(+). Functionally, catalyzes the dephosphorylation of undecaprenyl diphosphate (UPP). Confers resistance to bacitracin. The protein is Undecaprenyl-diphosphatase of Chlorobaculum tepidum (strain ATCC 49652 / DSM 12025 / NBRC 103806 / TLS) (Chlorobium tepidum).